Reading from the N-terminus, the 328-residue chain is Phosphate acyltransferase (328 aa).

This sequence belongs to the PlsX family. As to quaternary structure, homodimer. Probably interacts with PlsY.

It is found in the cytoplasm. It carries out the reaction a fatty acyl-[ACP] + phosphate = an acyl phosphate + holo-[ACP]. The protein operates within lipid metabolism; phospholipid metabolism. Its function is as follows. Catalyzes the reversible formation of acyl-phosphate (acyl-PO(4)) from acyl-[acyl-carrier-protein] (acyl-ACP). This enzyme utilizes acyl-ACP as fatty acyl donor, but not acyl-CoA. In Campylobacter jejuni subsp. jejuni serotype O:6 (strain 81116 / NCTC 11828), this protein is Phosphate acyltransferase.